Consider the following 218-residue polypeptide: Protein-lysine N-methyltransferase M142.8 (218 aa).

Belongs to the class I-like SAM-binding methyltransferase superfamily. EFM5 family.

It localises to the cytoplasm. Its function is as follows. S-adenosyl-L-methionine-dependent protein-lysine N-methyltransferase that methylates elongation factor 1-alpha. The sequence is that of Protein-lysine N-methyltransferase M142.8 from Caenorhabditis elegans.